The primary structure comprises 544 residues: Chaperonin GroEL (544 aa).

ATP-binding positions include 29–32 (TLGP), 86–90 (DGTTT), glycine 413, 476–478 (NAA), and aspartate 492.

The protein belongs to the chaperonin (HSP60) family. As to quaternary structure, forms a cylinder of 14 subunits composed of two heptameric rings stacked back-to-back. Interacts with the co-chaperonin GroES.

The protein resides in the cytoplasm. The catalysed reaction is ATP + H2O + a folded polypeptide = ADP + phosphate + an unfolded polypeptide.. Its function is as follows. Together with its co-chaperonin GroES, plays an essential role in assisting protein folding. The GroEL-GroES system forms a nano-cage that allows encapsulation of the non-native substrate proteins and provides a physical environment optimized to promote and accelerate protein folding. The protein is Chaperonin GroEL of Bacillus velezensis (strain DSM 23117 / BGSC 10A6 / LMG 26770 / FZB42) (Bacillus amyloliquefaciens subsp. plantarum).